The chain runs to 181 residues: Large ribosomal subunit protein uL5 (181 aa).

Belongs to the universal ribosomal protein uL5 family. Part of the 50S ribosomal subunit; part of the 5S rRNA/L5/L18/L25 subcomplex. Contacts the 5S rRNA and the P site tRNA. Forms a bridge to the 30S subunit in the 70S ribosome.

This is one of the proteins that bind and probably mediate the attachment of the 5S RNA into the large ribosomal subunit, where it forms part of the central protuberance. In the 70S ribosome it contacts protein S13 of the 30S subunit (bridge B1b), connecting the 2 subunits; this bridge is implicated in subunit movement. Contacts the P site tRNA; the 5S rRNA and some of its associated proteins might help stabilize positioning of ribosome-bound tRNAs. This chain is Large ribosomal subunit protein uL5, found in Rickettsia canadensis (strain McKiel).